Reading from the N-terminus, the 383-residue chain is S-adenosylmethionine synthase (383 aa).

Histidine 15 is a binding site for ATP. Aspartate 17 lines the Mg(2+) pocket. K(+) is bound at residue glutamate 43. L-methionine contacts are provided by glutamate 56 and glutamine 99. The interval 99 to 109 (QSPDINQGVDR) is flexible loop. Residues 164 to 166 (DAK), 230 to 231 (RF), aspartate 239, 245 to 246 (RK), alanine 262, and lysine 266 each bind ATP. Aspartate 239 serves as a coordination point for L-methionine. Lysine 270 lines the L-methionine pocket.

Belongs to the AdoMet synthase family. As to quaternary structure, homotetramer; dimer of dimers. The cofactor is Mg(2+). K(+) serves as cofactor.

The protein resides in the cytoplasm. The catalysed reaction is L-methionine + ATP + H2O = S-adenosyl-L-methionine + phosphate + diphosphate. It participates in amino-acid biosynthesis; S-adenosyl-L-methionine biosynthesis; S-adenosyl-L-methionine from L-methionine: step 1/1. Its function is as follows. Catalyzes the formation of S-adenosylmethionine (AdoMet) from methionine and ATP. The overall synthetic reaction is composed of two sequential steps, AdoMet formation and the subsequent tripolyphosphate hydrolysis which occurs prior to release of AdoMet from the enzyme. This is S-adenosylmethionine synthase from Pectobacterium carotovorum subsp. carotovorum (strain PC1).